Here is a 324-residue protein sequence, read N- to C-terminus: Type II restriction enzyme AplI (324 aa).

This sequence belongs to the BsuBI/PstI type II restriction endonuclease family. Mg(2+) serves as cofactor.

It catalyses the reaction Endonucleolytic cleavage of DNA to give specific double-stranded fragments with terminal 5'-phosphates.. With respect to regulation, activated by K(+) and Na(+) ions, whereas NH(4)(+) ions appear to inhibit endonuclease activity. In terms of biological role, a P subtype restriction enzyme that recognizes the double-stranded sequence 5'-CTGCAG-3' and cleaves after A-5. This is Type II restriction enzyme AplI (aplIR) from Arthrospira platensis (strain NIES-39 / UTEX 3086 / IAM M-135) (Spirulina platensis).